Consider the following 126-residue polypeptide: Autophagy-related protein 8-like protein DDB_G0290491 (126 aa).

Residue Gly123 is the site of Phosphatidylethanolamine amidated glycine attachment. A propeptide spans 124–126 (SDI) (removed in mature form).

Belongs to the ATG8 family.

The protein resides in the membrane. This is Autophagy-related protein 8-like protein DDB_G0290491 from Dictyostelium discoideum (Social amoeba).